The sequence spans 327 residues: Microtubule-associated protein RP/EB family member 2 (327 aa).

Polar residues predominate over residues Met1–Asp17. Positions Met1–His20 are disordered. The Calponin-homology (CH) domain maps to Thr56–Asp158. 2 disordered regions span residues Glu170–Leu238 and Leu295–Tyr327. The 71-residue stretch at Ser234 to His304 folds into the EB1 C-terminal domain.

This sequence belongs to the MAPRE family.

The protein resides in the cytoplasm. It is found in the cytoskeleton. In terms of biological role, may be involved in microtubule polymerization, and spindle function by stabilizing microtubules and anchoring them at centrosomes. In Xenopus laevis (African clawed frog), this protein is Microtubule-associated protein RP/EB family member 2 (mapre2).